A 248-amino-acid chain; its full sequence is Protein STPG4 (248 aa).

Interacts with histone H3. Interacts with histone H4.

It is found in the cytoplasm. The protein resides in the nucleus. Its function is as follows. Maternal factor that plays a role in epigenetic chromatin reprogramming during early development of the zygote. Involved in the regulation of gametic DNA demethylation by inducing the conversion of the modified genomic base 5-methylcytosine (5mC) into 5-hydroxymethylcytosine (5hmC). The sequence is that of Protein STPG4 from Homo sapiens (Human).